The chain runs to 175 residues: ATP synthase subunit b (175 aa).

The helical transmembrane segment at 22–42 (LNLLETNIINIAIVFGLLIFL) threads the bilayer.

The protein belongs to the ATPase B chain family. In terms of assembly, F-type ATPases have 2 components, F(1) - the catalytic core - and F(0) - the membrane proton channel. F(1) has five subunits: alpha(3), beta(3), gamma(1), delta(1), epsilon(1). F(0) has four main subunits: a(1), b(1), b'(1) and c(10-14). The alpha and beta chains form an alternating ring which encloses part of the gamma chain. F(1) is attached to F(0) by a central stalk formed by the gamma and epsilon chains, while a peripheral stalk is formed by the delta, b and b' chains.

The protein localises to the cell inner membrane. Its function is as follows. F(1)F(0) ATP synthase produces ATP from ADP in the presence of a proton or sodium gradient. F-type ATPases consist of two structural domains, F(1) containing the extramembraneous catalytic core and F(0) containing the membrane proton channel, linked together by a central stalk and a peripheral stalk. During catalysis, ATP synthesis in the catalytic domain of F(1) is coupled via a rotary mechanism of the central stalk subunits to proton translocation. In terms of biological role, component of the F(0) channel, it forms part of the peripheral stalk, linking F(1) to F(0). The sequence is that of ATP synthase subunit b from Gloeobacter violaceus (strain ATCC 29082 / PCC 7421).